The primary structure comprises 278 residues: 2-(acetamidomethylene)succinate hydrolase (278 aa).

Residues Ile41 and 106-107 (SL) each bind chloride. The Nucleophile role is filled by Ser106. Catalysis depends on residues Asp130 and His258.

It belongs to the AB hydrolase superfamily. In terms of assembly, homodimer.

It catalyses the reaction 2-(acetamidomethylene)succinate + 2 H2O + H(+) = succinate semialdehyde + acetate + NH4(+) + CO2. The protein operates within cofactor degradation; B6 vitamer degradation. Functionally, catalyzes the final reaction in the degradation of vitamin B6 from (E)-2-(acetamidomethylene)succinate (E-2AMS) to produce succinic semialdehyde, acetate, ammonia and carbon dioxide. This Mesorhizobium japonicum (strain LMG 29417 / CECT 9101 / MAFF 303099) (Mesorhizobium loti (strain MAFF 303099)) protein is 2-(acetamidomethylene)succinate hydrolase.